A 706-amino-acid polypeptide reads, in one-letter code: Dual specificity calcium/calmodulin-dependent 3',5'-cyclic nucleotide phosphodiesterase 1C (706 aa).

Methionine 1 is modified (N-acetylmethionine). Residues 123–146 (EKPRFKSIVHAVQAGIFVERMYRR) form a calmodulin-binding region. The region spanning 151–528 (VGLSYPPAVI…ERWRAKVPKE (378 aa)) is the PDEase domain. Histidine 228 functions as the Proton donor in the catalytic mechanism. Positions 232, 268, 269, and 376 each coordinate Zn(2+). A Mg(2+)-binding site is contributed by aspartate 269. 2 disordered regions span residues 453–497 (LIDE…INNS) and 524–655 (KVPK…IKPP). Polar residues-rich tracts occupy residues 456–476 (ESSQ…INSS) and 483–497 (VKSS…INNS). 3 stretches are compositionally biased toward basic and acidic residues: residues 524–554 (KVPK…EAKS), 580–597 (RKGD…KAGE), and 603–630 (DLKD…DGTK). Polar residues predominate over residues 638-647 (APSTSSTSRI).

Belongs to the cyclic nucleotide phosphodiesterase family. PDE1 subfamily. In terms of assembly, homodimer. It depends on Zn(2+) as a cofactor. The cofactor is Mg(2+). As to expression, highly expressed in testis and at moderate levels in heart. In terms of tissue distribution, expressed at a moderate level in brain, the cerebellum, testis, heart and olfactory epithelium. Highly expressed in olfactory epithelium and at very low levels, if any, in other tissues. In the cochlea, expressed in the inner and outer hair cells (at protein level). In the brain, highly expressed in the neurons of the granule layer of the cerebellum, some Purkinje cells, the central amygdaloid nucleus, and the interpolar spinal trigem nucleus and, at moderate levels, in the glomerular and external plexiform layer of the olfactory bulb as well as in parts of the caudate-putamen and olfactory tubercle.

The protein localises to the lysosome. It carries out the reaction a nucleoside 3',5'-cyclic phosphate + H2O = a nucleoside 5'-phosphate + H(+). The enzyme catalyses 3',5'-cyclic GMP + H2O = GMP + H(+). The catalysed reaction is 3',5'-cyclic AMP + H2O = AMP + H(+). Its activity is regulated as follows. Type I PDE are activated by the binding of calmodulin in the presence of Ca(2+). Different splice variants may have different sensitivities to Ca(2+). Exhibits a higher sensitivity to Ca(2+) stimulation than isoforms 1 and 2. Its function is as follows. Calmodulin-dependent cyclic nucleotide phosphodiesterase with a dual specificity for cAMP and cGMP, which are key regulators of many important physiological processes. Exhibits high affinity for both cAMP and cGMP. Modulates the amplitude and duration of the cAMP signal in sensory cilia in response to odorant stimulation, hence contributing to the generation of action potentials. Regulates smooth muscle cell proliferation. Regulates the stability of growth factor receptors, including PDGFRB. The chain is Dual specificity calcium/calmodulin-dependent 3',5'-cyclic nucleotide phosphodiesterase 1C from Mus musculus (Mouse).